The chain runs to 439 residues: Xaa-Pro dipeptidase (439 aa).

Positions 244, 255, 335, 380, and 419 each coordinate Mn(2+).

The protein belongs to the peptidase M24B family. Bacterial-type prolidase subfamily. The cofactor is Mn(2+).

It carries out the reaction Xaa-L-Pro dipeptide + H2O = an L-alpha-amino acid + L-proline. Its function is as follows. Splits dipeptides with a prolyl residue in the C-terminal position. The sequence is that of Xaa-Pro dipeptidase from Shewanella sp. (strain ANA-3).